A 346-amino-acid chain; its full sequence is UPF0324 membrane protein FN0533 (346 aa).

A run of 10 helical transmembrane segments spans residues 5 to 22 (LYGI…WKLG), 27 to 49 (LVGG…KNRA), 62 to 81 (VLQY…TIIS), 86 to 108 (SLPI…AKLI), 115 to 137 (VILI…APVI), 147 to 169 (AISV…GDIL), 216 to 233 (LTRT…AVYN), 248 to 270 (IFPM…NYFI), 283 to 305 (INNV…MVAI), and 315 to 337 (ILSG…LVSI).

Belongs to the UPF0324 family.

The protein resides in the cell membrane. The chain is UPF0324 membrane protein FN0533 from Fusobacterium nucleatum subsp. nucleatum (strain ATCC 25586 / DSM 15643 / BCRC 10681 / CIP 101130 / JCM 8532 / KCTC 2640 / LMG 13131 / VPI 4355).